The chain runs to 813 residues: Microtubule-associated protein 6 (813 aa).

S-palmitoyl cysteine attachment occurs at residues Cys-5, Cys-10, and Cys-11. Disordered stretches follow at residues 36–283 (ATEH…AAAD), 314–651 (VKPI…KDES), and 756–813 (PLKD…ESSP). Over residues 41–50 (GAPPQPPPPQ) the composition is skewed to pro residues. A compositionally biased stretch (low complexity) spans 51–62 (QQAQPALAPPSA). Residues 100–112 (GRSGPGPGLGSGS) show a composition bias toward gly residues. Ser-102 carries the post-translational modification Phosphoserine. Residues 118 to 141 (DSVMRQDYRAWKVQRPEPSCRPRS) are mn 1. Over residues 121-141 (MRQDYRAWKVQRPEPSCRPRS) the composition is skewed to basic and acidic residues. The interval 126 to 140 (RAWKVQRPEPSCRPR) is calmodulin-binding. At Tyr-143 the chain carries Phosphotyrosine. Over residues 149-173 (PFERETQYQKDFRAWPLPRRGDHPW) the composition is skewed to basic and acidic residues. The interval 153–176 (ETQYQKDFRAWPLPRRGDHPWIPK) is mn 2. The tract at residues 162–176 (AWPLPRRGDHPWIPK) is calmodulin-binding. Ser-187 carries the post-translational modification Phosphoserine. 4 calmodulin-binding regions span residues 189–203 (PILG…SQER), 306–320 (RAWT…IKAK), 357–371 (RRRI…FKEP), and 384–398 (PKKT…RKAK). Positions 298-321 (SSSYRNEFRAWTDIKPVKPIKAKP) are mn 3. Residues 367–376 (PFKEPPKVEK) show a composition bias toward basic and acidic residues. Residues 383–398 (KPKKTSASHKPTRKAK) show a composition bias toward basic residues. A compositionally biased stretch (basic and acidic residues) spans 420 to 439 (KPDDKEQSKEMNNKLAEAKE). The segment covering 443-454 (QPVSDSSKTQGP) has biased composition (polar residues). Basic and acidic residues predominate over residues 637 to 651 (KDQDPMVPEHPKDES). The residue at position 812 (Ser-812) is a Phosphoserine.

The protein belongs to the STOP family. As to quaternary structure, interacts with calmodulin (via C-terminus); the interaction is dependent on Ca(2+). Interacts (via C-terminus) with TMEM106B (via N-terminus). Interacts with ZDHHC17 (via ANK repeats). Interacts with ZDHHC13 (via ANK repeats). In terms of processing, palmitoylated. Probably depalmitoylated by ABHD17A, ABHD17B and ABHD17C. During neuronal polarization, palmitoylation and depalmitoylation cycles regulate MAP6 shuttling between secretory vesicles and microtubules, and its polarized distribution in the axon. In terms of tissue distribution, expressed in brain (at protein level). Expressed in spinal cord. Isoform 2 expression is up-regulated in the prefrontal cortex (Brodmann's area 46) of patients with schizophrenia (postmortem brain study).

It localises to the cytoplasm. Its subcellular location is the cytoskeleton. The protein resides in the golgi apparatus. It is found in the cell projection. The protein localises to the axon. It localises to the dendrite. Its subcellular location is the cytoplasmic vesicle. The protein resides in the secretory vesicle membrane. Its function is as follows. Involved in microtubule stabilization in many cell types, including neuronal cells. Specifically has microtubule cold stabilizing activity. Involved in dendrite morphogenesis and maintenance by regulating lysosomal trafficking via its interaction with TMEM106B. Regulates KIF5A-mediated axonal cargo transport. Regulates axonal growth during neuron polarization. In Homo sapiens (Human), this protein is Microtubule-associated protein 6 (MAP6).